Reading from the N-terminus, the 37-residue chain is Esculentin-2L (37 aa).

Cysteine 31 and cysteine 37 are joined by a disulfide.

Expressed by the skin glands.

It localises to the secreted. Antibacterial activity against Gram-positive bacterium S.aureus and Gram-negative bacterium E.coli. Has activity against C.albicans. This is Esculentin-2L from Rana luteiventris (Columbia spotted frog).